The following is a 168-amino-acid chain: Endoribonuclease YbeY (168 aa).

The Zn(2+) site is built by His-126, His-130, and His-136.

The protein belongs to the endoribonuclease YbeY family. It depends on Zn(2+) as a cofactor.

Its subcellular location is the cytoplasm. Single strand-specific metallo-endoribonuclease involved in late-stage 70S ribosome quality control and in maturation of the 3' terminus of the 16S rRNA. The polypeptide is Endoribonuclease YbeY (Rhizobium meliloti (strain 1021) (Ensifer meliloti)).